The sequence spans 567 residues: Synaptotagmin-like protein 1 (567 aa).

In terms of domain architecture, RabBD spans 31–87 (LLDLSFLTEEEQEAISDVLKRDAHLRQLEEGRVSKLRASLEDPWQLKILTGDWFQEA). The tract at residues 103–255 (RASIRRKKSP…VSSLNSSTLS (153 aa)) is disordered. The residue at position 120 (serine 120) is a Phosphoserine. Composition is skewed to acidic residues over residues 122–135 (GEAE…IEGE) and 170–184 (GQEE…ELEA). A compositionally biased stretch (polar residues) spans 208-219 (ESQPTPAQSKAT). A Phosphoserine modification is found at serine 220. The span at 235–255 (SLDRMLSSSSSVSSLNSSTLS) shows a compositional bias: low complexity. C2 domains lie at 271–390 (VRGS…WLPL) and 403–532 (SRGL…VPWM).

In terms of assembly, monomer. Binds NCF2 and NRXN1. Binds RAB27A that has been activated by GTP-binding via its N-terminus. Highly expressed in lung. Detected at lower levels in spleen, liver and kidney, and at very low levels in heart, brain and skeletal muscle. Expressed in cytotoxic T-lymphocytes (CTL).

The protein localises to the endomembrane system. The protein resides in the cell membrane. Its function is as follows. Binds phosphatidylinositol 3,4,5-trisphosphate. May play a role in vesicle trafficking. Acts as a RAB27A effector protein and may play a role in cytotoxic granule exocytosis in lymphocytes. The polypeptide is Synaptotagmin-like protein 1 (Sytl1) (Mus musculus (Mouse)).